The chain runs to 340 residues: Lysophospholipase L2 (340 aa).

The protein localises to the cell inner membrane. The catalysed reaction is a 1-acyl-sn-glycero-3-phosphocholine + H2O = sn-glycerol 3-phosphocholine + a fatty acid + H(+). The protein is Lysophospholipase L2 (pldB) of Escherichia coli O6:H1 (strain CFT073 / ATCC 700928 / UPEC).